We begin with the raw amino-acid sequence, 345 residues long: Biotin synthase (345 aa).

The Radical SAM core domain occupies 38-256 (QQVQVSTLLS…IAVARIMMPS (219 aa)). Residues cysteine 53, cysteine 57, and cysteine 60 each contribute to the [4Fe-4S] cluster site. [2Fe-2S] cluster-binding residues include cysteine 97, cysteine 128, cysteine 188, and arginine 260.

It belongs to the radical SAM superfamily. Biotin synthase family. As to quaternary structure, homodimer. It depends on [4Fe-4S] cluster as a cofactor. Requires [2Fe-2S] cluster as cofactor.

It catalyses the reaction (4R,5S)-dethiobiotin + (sulfur carrier)-SH + 2 reduced [2Fe-2S]-[ferredoxin] + 2 S-adenosyl-L-methionine = (sulfur carrier)-H + biotin + 2 5'-deoxyadenosine + 2 L-methionine + 2 oxidized [2Fe-2S]-[ferredoxin]. It functions in the pathway cofactor biosynthesis; biotin biosynthesis; biotin from 7,8-diaminononanoate: step 2/2. Its function is as follows. Catalyzes the conversion of dethiobiotin (DTB) to biotin by the insertion of a sulfur atom into dethiobiotin via a radical-based mechanism. The sequence is that of Biotin synthase from Photorhabdus laumondii subsp. laumondii (strain DSM 15139 / CIP 105565 / TT01) (Photorhabdus luminescens subsp. laumondii).